The primary structure comprises 254 residues: Hydroxyacylglutathione hydrolase (254 aa).

The Zn(2+) site is built by His53, His55, Asp57, His58, His111, Asp128, and His166.

The protein belongs to the metallo-beta-lactamase superfamily. Glyoxalase II family. As to quaternary structure, monomer. The cofactor is Zn(2+).

It carries out the reaction an S-(2-hydroxyacyl)glutathione + H2O = a 2-hydroxy carboxylate + glutathione + H(+). Its pathway is secondary metabolite metabolism; methylglyoxal degradation; (R)-lactate from methylglyoxal: step 2/2. Functionally, thiolesterase that catalyzes the hydrolysis of S-D-lactoyl-glutathione to form glutathione and D-lactic acid. In Aeromonas salmonicida (strain A449), this protein is Hydroxyacylglutathione hydrolase.